Consider the following 497-residue polypeptide: Glycerol kinase (497 aa).

Thr12 contributes to the ADP binding site. Residues Thr12, Thr13, and Ser14 each coordinate ATP. Position 12 (Thr12) interacts with sn-glycerol 3-phosphate. Arg16 serves as a coordination point for ADP. Residues Arg82, Glu83, Tyr133, and Asp243 each coordinate sn-glycerol 3-phosphate. Glycerol is bound by residues Arg82, Glu83, Tyr133, Asp243, and Gln244. Positions 265 and 308 each coordinate ADP. ATP is bound by residues Thr265, Gly308, Gln312, and Gly409. Gly409 is a binding site for ADP.

It belongs to the FGGY kinase family.

The catalysed reaction is glycerol + ATP = sn-glycerol 3-phosphate + ADP + H(+). Its pathway is polyol metabolism; glycerol degradation via glycerol kinase pathway; sn-glycerol 3-phosphate from glycerol: step 1/1. Its activity is regulated as follows. Inhibited by fructose 1,6-bisphosphate (FBP). Key enzyme in the regulation of glycerol uptake and metabolism. Catalyzes the phosphorylation of glycerol to yield sn-glycerol 3-phosphate. The protein is Glycerol kinase of Dichelobacter nodosus (strain VCS1703A).